Here is a 98-residue protein sequence, read N- to C-terminus: NADH-ubiquinone oxidoreductase chain 4L (98 aa).

Helical transmembrane passes span 2–22 (QMTM…LLMF), 26–46 (FMSS…LMSI), and 59–79 (FPLV…SLLV).

This sequence belongs to the complex I subunit 4L family. Core subunit of respiratory chain NADH dehydrogenase (Complex I) which is composed of 45 different subunits.

It is found in the mitochondrion inner membrane. The enzyme catalyses a ubiquinone + NADH + 5 H(+)(in) = a ubiquinol + NAD(+) + 4 H(+)(out). Its function is as follows. Core subunit of the mitochondrial membrane respiratory chain NADH dehydrogenase (Complex I) which catalyzes electron transfer from NADH through the respiratory chain, using ubiquinone as an electron acceptor. Part of the enzyme membrane arm which is embedded in the lipid bilayer and involved in proton translocation. In Echinosorex gymnura (Moon rat), this protein is NADH-ubiquinone oxidoreductase chain 4L (MT-ND4L).